The chain runs to 263 residues: DNA repair protein RecO (263 aa).

The interval aspartate 243–valine 263 is disordered. Polar residues predominate over residues valine 252 to valine 263.

The protein belongs to the RecO family.

Involved in DNA repair and RecF pathway recombination. The protein is DNA repair protein RecO of Neisseria meningitidis serogroup C / serotype 2a (strain ATCC 700532 / DSM 15464 / FAM18).